The sequence spans 712 residues: Polyribonucleotide nucleotidyltransferase (712 aa).

Positions 485 and 491 each coordinate Mg(2+). The region spanning 552 to 615 is the KH domain; sequence PRIHTIKINP…EAIRRIEAIT (64 aa). One can recognise an S1 motif domain in the interval 621 to 689; the sequence is NRIYEGKVVR…RQGRVRLSIK (69 aa).

The protein belongs to the polyribonucleotide nucleotidyltransferase family. As to quaternary structure, component of the RNA degradosome, which is a multiprotein complex involved in RNA processing and mRNA degradation. Mg(2+) is required as a cofactor.

It is found in the cytoplasm. The enzyme catalyses RNA(n+1) + phosphate = RNA(n) + a ribonucleoside 5'-diphosphate. Functionally, involved in mRNA degradation. Catalyzes the phosphorolysis of single-stranded polyribonucleotides processively in the 3'- to 5'-direction. In Aeromonas hydrophila subsp. hydrophila (strain ATCC 7966 / DSM 30187 / BCRC 13018 / CCUG 14551 / JCM 1027 / KCTC 2358 / NCIMB 9240 / NCTC 8049), this protein is Polyribonucleotide nucleotidyltransferase.